The primary structure comprises 497 residues: Glycogen synthase (497 aa).

Position 15 (lysine 15) interacts with ADP-alpha-D-glucose.

It belongs to the glycosyltransferase 1 family. Bacterial/plant glycogen synthase subfamily.

The enzyme catalyses [(1-&gt;4)-alpha-D-glucosyl](n) + ADP-alpha-D-glucose = [(1-&gt;4)-alpha-D-glucosyl](n+1) + ADP + H(+). It functions in the pathway glycan biosynthesis; glycogen biosynthesis. In terms of biological role, synthesizes alpha-1,4-glucan chains using ADP-glucose. The polypeptide is Glycogen synthase (Thermodesulfovibrio yellowstonii (strain ATCC 51303 / DSM 11347 / YP87)).